A 310-amino-acid polypeptide reads, in one-letter code: Carbamate kinase 1 (310 aa).

This sequence belongs to the carbamate kinase family.

It localises to the cytoplasm. It carries out the reaction hydrogencarbonate + NH4(+) + ATP = carbamoyl phosphate + ADP + H2O + H(+). It functions in the pathway metabolic intermediate metabolism; carbamoyl phosphate degradation; CO(2) and NH(3) from carbamoyl phosphate: step 1/1. The polypeptide is Carbamate kinase 1 (arcC1) (Staphylococcus aureus (strain MRSA252)).